A 366-amino-acid chain; its full sequence is G kinase-anchoring protein 1 (366 aa).

Positions 1 to 95 are interaction with IRS1; sequence MASAVLSSVL…SHSVCNVQHE (95 aa). The tract at residues 20-105 is disordered; that stretch reads QVDSGSGSDS…LSLPNPVQKE (86 aa). Phosphoserine is present on residues serine 23, serine 25, and serine 27. The span at 39–50 shows a compositional bias: polar residues; it reads NGKSQTLGNKST. Residues 46 to 77 are a coiled coil; it reads GNKSTANEKKREKRRKKKEQQQSEANELRNLA. Serine 106 is modified (phosphoserine; by PKG). 3 coiled-coil regions span residues 129–160, 250–299, and 326–353; these read DLEKALLLSKLEYEEHRQDYENAENASTQTKV, LKDG…MLQE, and VSSLHAALEQERSKVKVLQAELAKYQGG.

This sequence belongs to the GKAP1 family. As to quaternary structure, interacts with PRKG1 and IRS1.

It localises to the golgi apparatus. In terms of biological role, regulates insulin-dependent IRS1 tyrosine phosphorylation in adipocytes by modulating the availability of IRS1 to IR tyrosine kinase. Its association with IRS1 is required for insulin-induced translocation of SLC2A4 to the cell membrane. Involved in TNF-induced impairment of insulin-dependent IRS1 tyrosine phosphorylation. This Rattus norvegicus (Rat) protein is G kinase-anchoring protein 1 (Gkap1).